The sequence spans 150 residues: MVKTNTNKLTDDQISEIKESFDMFKSDNGKLDNDQIKYAFKALGCEITEETLELIKKKGQKSISFNSFFELVSPYIPKRDSMSTLEQAFKLFVKDGSGITFKDLKKVAINIGEECSDSDLYDMIEFADTDGDGVINKSEFISLMTTKKVL.

EF-hand domains are found at residues 12-46 (DQIS…LGCE), 80-114 (DSMS…IGEE), and 115-150 (CSDS…KKVL). Ca(2+) is bound by residues D128, D130, D132, and E139.

Belongs to the centrin family.

Its subcellular location is the cytoplasm. It is found in the cytoskeleton. It localises to the microtubule organizing center. The protein localises to the centrosome. Plays a fundamental role in microtubule-organizing center structure and function. This is Centrin-B (cenB) from Dictyostelium discoideum (Social amoeba).